A 703-amino-acid chain; its full sequence is Heat shock protein 75 kDa, mitochondrial (703 aa).

A mitochondrion-targeting transit peptide spans 1–56 (MARELRMLLLWGRRLRAPALAAACGGKPVLCPWRPPAQSWGPPRSLASSFHVGRPF). Positions 118 and 157 each coordinate ATP. Ser169 carries the post-translational modification Phosphoserine. ATP is bound at residue Asn170. Thr173 carries the phosphothreonine modification. Residues Phe204 and Arg401 each contribute to the ATP site. 3 positions are modified to N6-acetyllysine: Lys423, Lys430, and Lys465. Position 493 is a phosphothreonine (Thr493).

The protein belongs to the heat shock protein 90 family. In terms of assembly, binds to the intracellular domain of tumor necrosis factor type 1 receptor. Binds to RB1. Interacts with SRC. Interacts with SDHA.

It is found in the mitochondrion. It localises to the mitochondrion inner membrane. The protein resides in the mitochondrion matrix. Functionally, chaperone that expresses an ATPase activity. Involved in maintaining mitochondrial function and polarization, downstream of PINK1 and mitochondrial complex I. Is a negative regulator of mitochondrial respiration able to modulate the balance between oxidative phosphorylation and aerobic glycolysis. The impact of TRAP1 on mitochondrial respiration is probably mediated by modulation of mitochondrial SRC and inhibition of SDHA. The polypeptide is Heat shock protein 75 kDa, mitochondrial (TRAP1) (Bos taurus (Bovine)).